The primary structure comprises 160 residues: Cytochrome b6-f complex subunit 4 (160 aa).

3 consecutive transmembrane segments (helical) span residues 36 to 56, 95 to 115, and 131 to 151; these read LLYI…GLAV, LLGI…PFIE, and AFFL…CLPI.

This sequence belongs to the cytochrome b family. PetD subfamily. The 4 large subunits of the cytochrome b6-f complex are cytochrome b6, subunit IV (17 kDa polypeptide, PetD), cytochrome f and the Rieske protein, while the 4 small subunits are PetG, PetL, PetM and PetN. The complex functions as a dimer.

Its subcellular location is the cellular thylakoid membrane. In terms of biological role, component of the cytochrome b6-f complex, which mediates electron transfer between photosystem II (PSII) and photosystem I (PSI), cyclic electron flow around PSI, and state transitions. The protein is Cytochrome b6-f complex subunit 4 of Prochlorococcus marinus (strain SARG / CCMP1375 / SS120).